The chain runs to 77 residues: Large ribosomal subunit protein bL31 (77 aa).

It belongs to the bacterial ribosomal protein bL31 family. Type A subfamily. In terms of assembly, part of the 50S ribosomal subunit.

Functionally, binds the 23S rRNA. The chain is Large ribosomal subunit protein bL31 from Synechococcus elongatus (strain ATCC 33912 / PCC 7942 / FACHB-805) (Anacystis nidulans R2).